The primary structure comprises 469 residues: Uronate isomerase (469 aa).

This sequence belongs to the metallo-dependent hydrolases superfamily. Uronate isomerase family.

It carries out the reaction D-glucuronate = D-fructuronate. The enzyme catalyses aldehydo-D-galacturonate = keto-D-tagaturonate. The protein operates within carbohydrate metabolism; pentose and glucuronate interconversion. This is Uronate isomerase from Rhizobium meliloti (strain 1021) (Ensifer meliloti).